The chain runs to 498 residues: Glutamyl-tRNA(Gln) amidotransferase subunit A (498 aa).

Catalysis depends on charge relay system residues K85 and S160. The active-site Acyl-ester intermediate is the S184.

Belongs to the amidase family. GatA subfamily. Heterotrimer of A, B and C subunits.

The catalysed reaction is L-glutamyl-tRNA(Gln) + L-glutamine + ATP + H2O = L-glutaminyl-tRNA(Gln) + L-glutamate + ADP + phosphate + H(+). Functionally, allows the formation of correctly charged Gln-tRNA(Gln) through the transamidation of misacylated Glu-tRNA(Gln) in organisms which lack glutaminyl-tRNA synthetase. The reaction takes place in the presence of glutamine and ATP through an activated gamma-phospho-Glu-tRNA(Gln). This Mycolicibacterium vanbaalenii (strain DSM 7251 / JCM 13017 / BCRC 16820 / KCTC 9966 / NRRL B-24157 / PYR-1) (Mycobacterium vanbaalenii) protein is Glutamyl-tRNA(Gln) amidotransferase subunit A.